The chain runs to 401 residues: Chaperone protein DnaJ (401 aa).

Positions Asp4–Gly69 constitute a J domain. The CR-type zinc-finger motif lies at Gly156–Asp237. The Zn(2+) site is built by Cys169, Cys172, Cys185, Cys188, Cys211, Cys214, Cys225, and Cys228. CXXCXGXG motif repeat units follow at residues Cys169–Gly176, Cys185–Gly192, Cys211–Gly218, and Cys225–Gly232. The segment at Ala377–Ser401 is disordered. Over residues Asn385–Ser401 the composition is skewed to basic and acidic residues.

It belongs to the DnaJ family. In terms of assembly, homodimer. Zn(2+) is required as a cofactor.

Its subcellular location is the cytoplasm. In terms of biological role, participates actively in the response to hyperosmotic and heat shock by preventing the aggregation of stress-denatured proteins and by disaggregating proteins, also in an autonomous, DnaK-independent fashion. Unfolded proteins bind initially to DnaJ; upon interaction with the DnaJ-bound protein, DnaK hydrolyzes its bound ATP, resulting in the formation of a stable complex. GrpE releases ADP from DnaK; ATP binding to DnaK triggers the release of the substrate protein, thus completing the reaction cycle. Several rounds of ATP-dependent interactions between DnaJ, DnaK and GrpE are required for fully efficient folding. Also involved, together with DnaK and GrpE, in the DNA replication of plasmids through activation of initiation proteins. This is Chaperone protein DnaJ from Chlorobium limicola (strain DSM 245 / NBRC 103803 / 6330).